Here is a 70-residue protein sequence, read N- to C-terminus: Cytochrome c oxidase subunit 8B, mitochondrial (70 aa).

A mitochondrion-targeting transit peptide spans 1–24; that stretch reads MSRLAPPLRLLQAPLKCWAVPKAH. Over 25–35 the chain is Mitochondrial matrix; it reads VSAKPARTPTS. A helical membrane pass occupies residues 36-59; that stretch reads PMEQAVGLSVMFVSFLVPSGWVLS. Residues 60-70 lie on the Mitochondrial intermembrane side of the membrane; sequence HLESYKKSSTT.

Belongs to the cytochrome c oxidase VIII family. In terms of assembly, component of the cytochrome c oxidase (complex IV, CIV), a multisubunit enzyme composed of 14 subunits. The complex is composed of a catalytic core of 3 subunits MT-CO1, MT-CO2 and MT-CO3, encoded in the mitochondrial DNA, and 11 supernumerary subunits COX4I, COX5A, COX5B, COX6A, COX6B, COX6C, COX7A, COX7B, COX7C, COX8 and NDUFA4, which are encoded in the nuclear genome. The complex exists as a monomer or a dimer and forms supercomplexes (SCs) in the inner mitochondrial membrane with NADH-ubiquinone oxidoreductase (complex I, CI) and ubiquinol-cytochrome c oxidoreductase (cytochrome b-c1 complex, complex III, CIII), resulting in different assemblies (supercomplex SCI(1)III(2)IV(1) and megacomplex MCI(2)III(2)IV(2)).

The protein resides in the mitochondrion inner membrane. It participates in energy metabolism; oxidative phosphorylation. Its function is as follows. Component of the cytochrome c oxidase, the last enzyme in the mitochondrial electron transport chain which drives oxidative phosphorylation. The respiratory chain contains 3 multisubunit complexes succinate dehydrogenase (complex II, CII), ubiquinol-cytochrome c oxidoreductase (cytochrome b-c1 complex, complex III, CIII) and cytochrome c oxidase (complex IV, CIV), that cooperate to transfer electrons derived from NADH and succinate to molecular oxygen, creating an electrochemical gradient over the inner membrane that drives transmembrane transport and the ATP synthase. Cytochrome c oxidase is the component of the respiratory chain that catalyzes the reduction of oxygen to water. Electrons originating from reduced cytochrome c in the intermembrane space (IMS) are transferred via the dinuclear copper A center (CU(A)) of subunit 2 and heme A of subunit 1 to the active site in subunit 1, a binuclear center (BNC) formed by heme A3 and copper B (CU(B)). The BNC reduces molecular oxygen to 2 water molecules using 4 electrons from cytochrome c in the IMS and 4 protons from the mitochondrial matrix. The polypeptide is Cytochrome c oxidase subunit 8B, mitochondrial (COX8B) (Carlito syrichta (Philippine tarsier)).